We begin with the raw amino-acid sequence, 733 residues long: Phosphoribosylformylglycinamidine synthase subunit PurL (733 aa).

Residue histidine 41 is part of the active site. The ATP site is built by tyrosine 44 and lysine 83. Glutamate 85 contributes to the Mg(2+) binding site. Substrate contacts are provided by residues 86-89 and arginine 108; that span reads SHNH. Histidine 87 acts as the Proton acceptor in catalysis. Residue aspartate 109 participates in Mg(2+) binding. The tract at residues 212-232 is disordered; the sequence is GASFASQELSEESEEKRPSVQ. Glutamine 232 provides a ligand contact to substrate. Aspartate 260 contacts Mg(2+). 304-306 provides a ligand contact to substrate; the sequence is ESQ. ATP-binding residues include aspartate 488 and glycine 525. Asparagine 526 contacts Mg(2+). Serine 528 is a substrate binding site.

It belongs to the FGAMS family. In terms of assembly, monomer. Part of the FGAM synthase complex composed of 1 PurL, 1 PurQ and 2 PurS subunits.

The protein localises to the cytoplasm. It catalyses the reaction N(2)-formyl-N(1)-(5-phospho-beta-D-ribosyl)glycinamide + L-glutamine + ATP + H2O = 2-formamido-N(1)-(5-O-phospho-beta-D-ribosyl)acetamidine + L-glutamate + ADP + phosphate + H(+). It functions in the pathway purine metabolism; IMP biosynthesis via de novo pathway; 5-amino-1-(5-phospho-D-ribosyl)imidazole from N(2)-formyl-N(1)-(5-phospho-D-ribosyl)glycinamide: step 1/2. Part of the phosphoribosylformylglycinamidine synthase complex involved in the purines biosynthetic pathway. Catalyzes the ATP-dependent conversion of formylglycinamide ribonucleotide (FGAR) and glutamine to yield formylglycinamidine ribonucleotide (FGAM) and glutamate. The FGAM synthase complex is composed of three subunits. PurQ produces an ammonia molecule by converting glutamine to glutamate. PurL transfers the ammonia molecule to FGAR to form FGAM in an ATP-dependent manner. PurS interacts with PurQ and PurL and is thought to assist in the transfer of the ammonia molecule from PurQ to PurL. This chain is Phosphoribosylformylglycinamidine synthase subunit PurL, found in Thermoanaerobacter pseudethanolicus (strain ATCC 33223 / 39E) (Clostridium thermohydrosulfuricum).